Consider the following 56-residue polypeptide: Potassium channel toxin alpha-KTx 9.1 (56 aa).

The first 28 residues, 1 to 28 (MSRLFTLVLIVLAMNVMMAIISDPVVEA), serve as a signal peptide directing secretion. Disulfide bonds link cysteine 31/cysteine 47, cysteine 34/cysteine 52, and cysteine 38/cysteine 54.

In terms of tissue distribution, expressed by the venom gland.

The protein resides in the secreted. In terms of biological role, blocks small conductance calcium-activated potassium channels (KCNN, SK). Weakly inhibits the Kv7.1/KCNQ1 channel (10 uM of the toxin inhibits currents by 23.3%). Low toxicity by intracerebroventricular injection into mice. This chain is Potassium channel toxin alpha-KTx 9.1, found in Olivierus martensii (Manchurian scorpion).